A 307-amino-acid polypeptide reads, in one-letter code: MSAKVWVLGDAVVDLLPESDGRLLPCPGGAPANVAVGIARLGGTSGFIGRVGDDPFGALMQRTLLTEGVDITYLKQDEWHRTSTVLVDLNDQGERSFTFMVRPSADLFLETTDLPCWRHGEWLHLCSIALSAEPSRTSAFTAMTAIRHAGGFVSFDPNIREDLWQDEHLLRLCLRQALQLADVVKLSEEEWRLISGKTQNDRDICALAKEYEIAMLLVTKGAEGVVVCYRGQVHHFAGMSVNCVDSTGAGDAFVAGLLTGLSSTGLSTDEREMRRIIDLAQRCGALAVTAKGAMTALPCRQELESEK.

It belongs to the carbohydrate kinase PfkB family.

The enzyme catalyses D-fructose + ATP = D-fructose 6-phosphate + ADP + H(+). The sequence is that of Fructokinase (cscK) from Escherichia coli.